Consider the following 296-residue polypeptide: Ribosomal RNA small subunit methyltransferase A (296 aa).

Residues Asn-30, Leu-32, Gly-57, Glu-78, Asp-103, and Asn-128 each coordinate S-adenosyl-L-methionine.

The protein belongs to the class I-like SAM-binding methyltransferase superfamily. rRNA adenine N(6)-methyltransferase family. RsmA subfamily.

The protein resides in the cytoplasm. The catalysed reaction is adenosine(1518)/adenosine(1519) in 16S rRNA + 4 S-adenosyl-L-methionine = N(6)-dimethyladenosine(1518)/N(6)-dimethyladenosine(1519) in 16S rRNA + 4 S-adenosyl-L-homocysteine + 4 H(+). In terms of biological role, specifically dimethylates two adjacent adenosines (A1518 and A1519) in the loop of a conserved hairpin near the 3'-end of 16S rRNA in the 30S particle. May play a critical role in biogenesis of 30S subunits. In Staphylococcus carnosus (strain TM300), this protein is Ribosomal RNA small subunit methyltransferase A.